A 94-amino-acid polypeptide reads, in one-letter code: Pyrimidine/purine nucleoside phosphorylase (94 aa).

It belongs to the nucleoside phosphorylase PpnP family.

The catalysed reaction is a purine D-ribonucleoside + phosphate = a purine nucleobase + alpha-D-ribose 1-phosphate. It carries out the reaction adenosine + phosphate = alpha-D-ribose 1-phosphate + adenine. The enzyme catalyses cytidine + phosphate = cytosine + alpha-D-ribose 1-phosphate. It catalyses the reaction guanosine + phosphate = alpha-D-ribose 1-phosphate + guanine. The catalysed reaction is inosine + phosphate = alpha-D-ribose 1-phosphate + hypoxanthine. It carries out the reaction thymidine + phosphate = 2-deoxy-alpha-D-ribose 1-phosphate + thymine. The enzyme catalyses uridine + phosphate = alpha-D-ribose 1-phosphate + uracil. It catalyses the reaction xanthosine + phosphate = alpha-D-ribose 1-phosphate + xanthine. Its function is as follows. Catalyzes the phosphorolysis of diverse nucleosides, yielding D-ribose 1-phosphate and the respective free bases. Can use uridine, adenosine, guanosine, cytidine, thymidine, inosine and xanthosine as substrates. Also catalyzes the reverse reactions. This chain is Pyrimidine/purine nucleoside phosphorylase, found in Pseudomonas entomophila (strain L48).